Reading from the N-terminus, the 264-residue chain is ATP synthase subunit a (264 aa).

5 helical membrane-spanning segments follow: residues 39-59 (LDTLIISVVLGALFILIFYIV), 97-117 (VAPLALTIFIWVFLMNFMDLV), 139-159 (TADPTLTFAMSITVFVLVIFY), 205-225 (LFGNLFAGELIFILIALLPWW), and 239-259 (LLVITVQAFIFMMLTVVYISL).

It belongs to the ATPase A chain family. In terms of assembly, F-type ATPases have 2 components, CF(1) - the catalytic core - and CF(0) - the membrane proton channel. CF(1) has five subunits: alpha(3), beta(3), gamma(1), delta(1), epsilon(1). CF(0) has three main subunits: a(1), b(2) and c(9-12). The alpha and beta chains form an alternating ring which encloses part of the gamma chain. CF(1) is attached to CF(0) by a central stalk formed by the gamma and epsilon chains, while a peripheral stalk is formed by the delta and b chains.

The protein resides in the cell inner membrane. Functionally, key component of the proton channel; it plays a direct role in the translocation of protons across the membrane. In Coxiella burnetii (strain RSA 331 / Henzerling II), this protein is ATP synthase subunit a.